We begin with the raw amino-acid sequence, 104 residues long: UPF0045 protein YqgV (104 aa).

The protein belongs to the UPF0045 family.

This chain is UPF0045 protein YqgV (yqgV), found in Bacillus subtilis (strain 168).